Reading from the N-terminus, the 421-residue chain is Tol-Pal system protein TolB (421 aa).

The first 16 residues, 1 to 16 (MRILVFLWLGLSSLFA), serve as a signal peptide directing secretion.

Belongs to the TolB family. In terms of assembly, the Tol-Pal system is composed of five core proteins: the inner membrane proteins TolA, TolQ and TolR, the periplasmic protein TolB and the outer membrane protein Pal. They form a network linking the inner and outer membranes and the peptidoglycan layer.

It localises to the periplasm. Functionally, part of the Tol-Pal system, which plays a role in outer membrane invagination during cell division and is important for maintaining outer membrane integrity. The chain is Tol-Pal system protein TolB from Wolinella succinogenes (strain ATCC 29543 / DSM 1740 / CCUG 13145 / JCM 31913 / LMG 7466 / NCTC 11488 / FDC 602W) (Vibrio succinogenes).